The sequence spans 342 residues: Deoxyguanosinetriphosphate triphosphohydrolase-like protein (342 aa).

The HD domain maps to 75 to 190; the sequence is RLVHTLEVSQ…VRFADKIAYV (116 aa).

It belongs to the dGTPase family. Type 2 subfamily.

The chain is Deoxyguanosinetriphosphate triphosphohydrolase-like protein from Clostridium perfringens (strain SM101 / Type A).